The primary structure comprises 437 residues: Phosphoglucosamine mutase (437 aa).

S101 (phosphoserine intermediate) is an active-site residue. Positions 101, 234, 236, and 238 each coordinate Mg(2+). S101 carries the phosphoserine modification.

The protein belongs to the phosphohexose mutase family. The cofactor is Mg(2+). In terms of processing, activated by phosphorylation.

It carries out the reaction alpha-D-glucosamine 1-phosphate = D-glucosamine 6-phosphate. Catalyzes the conversion of glucosamine-6-phosphate to glucosamine-1-phosphate. The sequence is that of Phosphoglucosamine mutase from Thermus thermophilus (strain ATCC BAA-163 / DSM 7039 / HB27).